The primary structure comprises 100 residues: Urease subunit gamma (100 aa).

The protein belongs to the urease gamma subunit family. As to quaternary structure, heterotrimer of UreA (gamma), UreB (beta) and UreC (alpha) subunits. Three heterotrimers associate to form the active enzyme.

The protein localises to the cytoplasm. It carries out the reaction urea + 2 H2O + H(+) = hydrogencarbonate + 2 NH4(+). It functions in the pathway nitrogen metabolism; urea degradation; CO(2) and NH(3) from urea (urease route): step 1/1. The polypeptide is Urease subunit gamma (Mesorhizobium japonicum (strain LMG 29417 / CECT 9101 / MAFF 303099) (Mesorhizobium loti (strain MAFF 303099))).